The primary structure comprises 428 residues: Methyl-branched lipid omega-hydroxylase (428 aa).

Heme is bound at residue Cys-379.

The protein belongs to the cytochrome P450 family. It depends on heme as a cofactor.

The catalysed reaction is a methyl-branched lipid + O2 + 2 reduced ferredoxin [iron-sulfur] cluster + 2 H(+) = an omega-hydroxy-methyl-branched lipid + H2O + 2 oxidized ferredoxin [iron-sulfur] cluster.. It carries out the reaction cholest-4-en-3-one + 6 reduced [2Fe-2S]-[ferredoxin] + 3 O2 + 5 H(+) = (25R)-3-oxocholest-4-en-26-oate + 6 oxidized [2Fe-2S]-[ferredoxin] + 4 H2O. The protein operates within lipid metabolism; branched-chain fatty acid metabolism. In terms of biological role, primarily hydroxylates the omega-carbon of a number of methyl-branched lipids, including (2E,6E)-farnesol, phytanate, geranylgeraniol, 15-methylpalmitate and (2E,6E)-farnesyl diphosphate. Also catalyzes the sequential oxidation of the terminal methyl of cholest-4-en-3-one into (25R)-26-hydroxycholest-4-en-3-one (alcohol), (25R)-26-oxocholest-4-en-3-one (aldehyde), to finally yield the carboxylic acid (25R)-3-oxocholest-4-en-26-oate. Also able to sequentially oxidize cholesterol itself, not only cholest-4-en-3-one. This is Methyl-branched lipid omega-hydroxylase (cyp124) from Mycobacterium tuberculosis (strain CDC 1551 / Oshkosh).